Reading from the N-terminus, the 246-residue chain is Small ribosomal subunit protein uS3 (246 aa).

Residues Ile-19–Ala-98 enclose the KH type-2 domain. Positions Leu-218–Ser-246 are disordered. A compositionally biased stretch (basic and acidic residues) spans Leu-226–Glu-237.

This sequence belongs to the universal ribosomal protein uS3 family. Part of the 30S ribosomal subunit.

In terms of biological role, binds the lower part of the 30S subunit head. The protein is Small ribosomal subunit protein uS3 of Aeropyrum pernix (strain ATCC 700893 / DSM 11879 / JCM 9820 / NBRC 100138 / K1).